The sequence spans 538 residues: Chaperonin GroEL (538 aa).

ATP contacts are provided by residues 29-32, 86-90, Gly-413, 476-478, and Asp-492; these read TIGP, DGTTT, and NAA.

The protein belongs to the chaperonin (HSP60) family. Forms a cylinder of 14 subunits composed of two heptameric rings stacked back-to-back. Interacts with the co-chaperonin GroES.

The protein localises to the cytoplasm. It carries out the reaction ATP + H2O + a folded polypeptide = ADP + phosphate + an unfolded polypeptide.. Its function is as follows. Together with its co-chaperonin GroES, plays an essential role in assisting protein folding. The GroEL-GroES system forms a nano-cage that allows encapsulation of the non-native substrate proteins and provides a physical environment optimized to promote and accelerate protein folding. The protein is Chaperonin GroEL of Staphylococcus aureus (strain MRSA252).